A 1174-amino-acid chain; its full sequence is Male determiner protein Mdmd(V) (1174 aa).

Positions 1–15 (MNATDAESRKPENKP) are enriched in basic and acidic residues. Disordered stretches follow at residues 1–51 (MNAT…SGQR), 79–110 (RKDG…PVEL), and 136–259 (KQLS…LRRS). The segment covering 16-35 (SSESSSSGSTSGSSDGEVSS) has biased composition (low complexity). The span at 36 to 47 (KTYFKNNKSKVL) shows a compositional bias: polar residues. Residues 79-92 (RKDGSNEMLPKEDS) are compositionally biased toward basic and acidic residues. The segment covering 93–102 (INTNHNYTTD) has biased composition (polar residues). The span at 138-153 (LSAYRSRSRSTRLSYS) shows a compositional bias: low complexity. Positions 167–180 (SRYKKSVLRSRRTS) are enriched in basic residues. Over residues 183 to 200 (HGRDSSTTKRSVSRDKDN) the composition is skewed to basic and acidic residues. Residues 201-223 (RLRRRIGSSRSHTRSHSRFRRSE) show a composition bias toward basic residues. Residues 235–259 (RSQERRHERRRSMSSDYERIALRRS) show a composition bias toward basic and acidic residues. Residues 348–531 (KKYIHGYINK…KVLFQVRRDG (184 aa)) form the MIF4G domain. Positions 597–608 (DSDGSFGSGSNS) are enriched in low complexity. The interval 597 to 616 (DSDGSFGSGSNSETALSDCD) is disordered. Positions 641-757 (ALRRTIYLTL…SWDVLDCIKL (117 aa)) constitute an MI domain. Positions 840-857 (SAPSSSSSSSLSSELSAP) are enriched in low complexity. Disordered regions lie at residues 840 to 1045 (SAPS…SRTK) and 1095 to 1133 (RKDN…NHSR). Positions 869-909 (KKKHKGKNKKMTKKKNPSKKKEKTKKIVGKNKIAAKNKTIK) are enriched in basic residues. A compositionally biased stretch (basic and acidic residues) spans 910–924 (RRTDKDNSSSKDNFL). The segment covering 926–957 (SESSSNESISLDSLSSELFAPSSYSSSESSND) has biased composition (low complexity). Residues 963-1001 (KHKGKNKKMTKKKNPSNKREKTKKKLSKNKKAPNKNTKK) are compositionally biased toward basic residues. A compositionally biased stretch (low complexity) spans 1010-1020 (SSESSISESKS). A compositionally biased stretch (basic residues) spans 1034 to 1045 (RKKRVTSKSRTK). The span at 1095–1118 (RKDNYGNRQNHEISQRHDSEIKRR) shows a compositional bias: basic and acidic residues. Basic residues predominate over residues 1119-1130 (REERKKRHHEKN).

It belongs to the CWC22 family. In terms of assembly, component of the spliceosome C complex.

It is found in the nucleus speckle. Functionally, male determiner protein (M-factor) that controls male somatic sexual differentiation. Acts as a dominant factor that regulates the mRNA splicing of transformer (tra) and doublesex (dsx) transcripts and promotes expression of male splice forms of tra and dsx. Probably acts as a component of the spliceosome C complex required for mRNA splicing factor and exon-junction complex (EJC) assembly. Hinders eIF4AIII from non-specifically binding RNA and escorts it to the splicing machinery to promote EJC assembly on mature mRNAs. The polypeptide is Male determiner protein Mdmd(V) (Musca domestica (House fly)).